A 748-amino-acid chain; its full sequence is Pleckstrin homology domain-containing family M member 3 (748 aa).

Disordered regions lie at residues His88–Ser107 and Asn129–Asn187. Composition is skewed to basic and acidic residues over residues Asn129 to Lys140 and Ser148 to Asn159. Polar residues predominate over residues Gln167 to Phe180. PH domains are found at residues Asn200–Cys297 and Asn348–Asn443. The segment at Ser656–Cys709 adopts a Phorbol-ester/DAG-type zinc-finger fold.

It is found in the cytoplasm. The protein localises to the golgi apparatus. The protein resides in the cell membrane. Functionally, may play a role during muscle differentiation. In Xenopus laevis (African clawed frog), this protein is Pleckstrin homology domain-containing family M member 3 (plekhm3).